The primary structure comprises 218 residues: Large ribosomal subunit protein uL1 (218 aa).

This sequence belongs to the universal ribosomal protein uL1 family. Part of the 50S ribosomal subunit.

Binds directly to 23S rRNA. Probably involved in E site tRNA release. Functionally, protein L1 is also a translational repressor protein, it controls the translation of its operon by binding to its mRNA. The polypeptide is Large ribosomal subunit protein uL1 (Metallosphaera sedula (strain ATCC 51363 / DSM 5348 / JCM 9185 / NBRC 15509 / TH2)).